A 276-amino-acid chain; its full sequence is Omega-amidase NIT2 (276 aa).

In terms of domain architecture, CN hydrolase spans 4–248 (FRLALIQLQV…ETILYSDIDL (245 aa)). S26 is modified (phosphoserine). The Proton acceptor role is filled by E43. K68 is modified (N6-acetyllysine; alternate). Position 68 is an N6-succinyllysine; alternate (K68). The active-site Proton donor is the K112. N6-succinyllysine occurs at positions 123 and 130. Catalysis depends on C153, which acts as the Nucleophile.

Belongs to the carbon-nitrogen hydrolase superfamily. NIT1/NIT2 family. As to quaternary structure, homodimer.

The protein localises to the cytoplasm. It catalyses the reaction a monoamide of a dicarboxylate + H2O = a dicarboxylate + NH4(+). It carries out the reaction 2-oxoglutaramate + H2O = 2-oxoglutarate + NH4(+). The catalysed reaction is 2-oxosuccinamate + H2O = oxaloacetate + NH4(+). Functionally, has omega-amidase activity. The role of omega-amidase is to remove potentially toxic intermediates by converting 2-oxoglutaramate and 2-oxosuccinamate to biologically useful 2-oxoglutarate and oxaloacetate, respectively. Can also hydrolyze gamma-monomethyl-alpha-ketoglutarate in vitro. This chain is Omega-amidase NIT2, found in Mus musculus (Mouse).